A 239-amino-acid chain; its full sequence is Protein UL20 homolog (239 aa).

3 consecutive transmembrane segments (helical) span residues proline 65 to isoleucine 81, phenylalanine 140 to valine 156, and leucine 189 to valine 208.

This sequence belongs to the alphaherpesvirinae UL20 family. Interacts with gK (via N-terminus); this interaction plays a role in the coordinate transport of UL20 and gK to the trans-Golgi network (TGN), and is required for their cell surface expression. Interacts with gB.

The protein localises to the virion. Its subcellular location is the host cell membrane. It is found in the host endosome membrane. The protein resides in the host Golgi apparatus membrane. It localises to the host nucleus membrane. Its function is as follows. Plays an essential role in egress of virus particles from the nucleus, cytoplasmic envelopment and virus-induced cell fusion. Forms a functional protein complex with gK and this interaction is absolutely essential for their coordinate intracellular transport, gK glycosylation, expression on host cell surface, and function. Together, they modulate gB-mediated virus-induced cell fusion and virion egress and therefore actively participate in these processes. The polypeptide is Protein UL20 homolog (Equus caballus (Horse)).